Here is a 202-residue protein sequence, read N- to C-terminus: LexA repressor (202 aa).

Positions 28–48 (IAEIARAIGVSSPHGVREQLR) form a DNA-binding region, H-T-H motif. Active-site for autocatalytic cleavage activity residues include Ser-120 and Lys-157.

It belongs to the peptidase S24 family. Homodimer.

It carries out the reaction Hydrolysis of Ala-|-Gly bond in repressor LexA.. Represses a number of genes involved in the response to DNA damage (SOS response), including recA and lexA. In the presence of single-stranded DNA, RecA interacts with LexA causing an autocatalytic cleavage which disrupts the DNA-binding part of LexA, leading to derepression of the SOS regulon and eventually DNA repair. The chain is LexA repressor from Methylococcus capsulatus (strain ATCC 33009 / NCIMB 11132 / Bath).